Consider the following 265-residue polypeptide: Pre-mRNA-splicing factor cwf15 (265 aa).

Disordered regions lie at residues 1–31 and 62–197; these read MTTAHRPQFDPARGHSEMAPTRITSSRALPA and AAHF…ALEQ. Positions 113-125 are enriched in acidic residues; sequence EADEDASDSDDSV. The segment covering 143-155 has biased composition (low complexity); it reads SNSQESVDSSNSE. Residues 155–205 are a coiled coil; the sequence is ESSDEESDSEDETQQLLRELENIKQERKREQMLQEEKNRALEQEKREREIA. The span at 156 to 167 shows a compositional bias: acidic residues; the sequence is SSDEESDSEDET. The span at 172–197 shows a compositional bias: basic and acidic residues; that stretch reads RELENIKQERKREQMLQEEKNRALEQ.

Belongs to the CWC15 family. As to quaternary structure, belongs to the 40S cdc5-associated complex (or cwf complex), a spliceosome sub-complex reminiscent of a late-stage spliceosome composed of the U2, U5 and U6 snRNAs and at least brr2, cdc5, cwf2/prp3, cwf3/syf1, cwf4/syf3, cwf5/ecm2, spp42/cwf6, cwf7/spf27, cwf8, cwf9, cwf10, cwf11, cwf12, prp45/cwf13, cwf14, cwf15, cwf16, cwf17, cwf18, cwf19, cwf20, cwf21, cwf22, cwf23, cwf24, cwf25, cwf26, cyp7/cwf27, cwf28, cwf29/ist3, lea1, msl1, prp5/cwf1, prp10, prp12/sap130, prp17, prp22, sap61, sap62, sap114, sap145, slu7, smb1, smd1, smd3, smf1, smg1 and syf2.

Its subcellular location is the nucleus. Its function is as follows. Involved in pre-mRNA splicing. This chain is Pre-mRNA-splicing factor cwf15 (cwf15), found in Schizosaccharomyces pombe (strain 972 / ATCC 24843) (Fission yeast).